Reading from the N-terminus, the 90-residue chain is Small ribosomal subunit protein uS15c (90 aa).

The span at 1–11 (MVKNSFSSVIS) shows a compositional bias: polar residues. Residues 1-20 (MVKNSFSSVISQEEKKENGG) form a disordered region.

Belongs to the universal ribosomal protein uS15 family. In terms of assembly, part of the 30S ribosomal subunit.

It localises to the plastid. The protein resides in the chloroplast. The sequence is that of Small ribosomal subunit protein uS15c (rps15) from Cucumis sativus (Cucumber).